Reading from the N-terminus, the 291-residue chain is Phosphatidylserine decarboxylase proenzyme (291 aa).

Active-site charge relay system; for autoendoproteolytic cleavage activity residues include D93, H150, and S253. S253 serves as the catalytic Schiff-base intermediate with substrate; via pyruvic acid; for decarboxylase activity. S253 bears the Pyruvic acid (Ser); by autocatalysis mark.

It belongs to the phosphatidylserine decarboxylase family. PSD-B subfamily. Prokaryotic type I sub-subfamily. In terms of assembly, heterodimer of a large membrane-associated beta subunit and a small pyruvoyl-containing alpha subunit. The cofactor is pyruvate. In terms of processing, is synthesized initially as an inactive proenzyme. Formation of the active enzyme involves a self-maturation process in which the active site pyruvoyl group is generated from an internal serine residue via an autocatalytic post-translational modification. Two non-identical subunits are generated from the proenzyme in this reaction, and the pyruvate is formed at the N-terminus of the alpha chain, which is derived from the carboxyl end of the proenzyme. The autoendoproteolytic cleavage occurs by a canonical serine protease mechanism, in which the side chain hydroxyl group of the serine supplies its oxygen atom to form the C-terminus of the beta chain, while the remainder of the serine residue undergoes an oxidative deamination to produce ammonia and the pyruvoyl prosthetic group on the alpha chain. During this reaction, the Ser that is part of the protease active site of the proenzyme becomes the pyruvoyl prosthetic group, which constitutes an essential element of the active site of the mature decarboxylase.

Its subcellular location is the cell membrane. It catalyses the reaction a 1,2-diacyl-sn-glycero-3-phospho-L-serine + H(+) = a 1,2-diacyl-sn-glycero-3-phosphoethanolamine + CO2. It functions in the pathway phospholipid metabolism; phosphatidylethanolamine biosynthesis; phosphatidylethanolamine from CDP-diacylglycerol: step 2/2. Its function is as follows. Catalyzes the formation of phosphatidylethanolamine (PtdEtn) from phosphatidylserine (PtdSer). This chain is Phosphatidylserine decarboxylase proenzyme, found in Alcanivorax borkumensis (strain ATCC 700651 / DSM 11573 / NCIMB 13689 / SK2).